Reading from the N-terminus, the 252-residue chain is Probable transcriptional regulator SauR (252 aa).

Positions 6–68 (NAAAVRAFRI…AGNRHYECSS (63 aa)) constitute an HTH iclR-type domain. A DNA-binding region (H-T-H motif) is located at residues 28–47 (LAAIVQAIELPKQTVHRILK). In terms of domain architecture, IclR-ED spans 83 to 252 (PAAARHAILQ…ADEMVKTFCE (170 aa)).

In terms of biological role, may regulate transcription of the sauSTU operon. The sequence is that of Probable transcriptional regulator SauR (sauR) from Cupriavidus necator (strain ATCC 17699 / DSM 428 / KCTC 22496 / NCIMB 10442 / H16 / Stanier 337) (Ralstonia eutropha).